Here is a 119-residue protein sequence, read N- to C-terminus: Large ribosomal subunit protein uL18 (119 aa).

The protein belongs to the universal ribosomal protein uL18 family. In terms of assembly, part of the 50S ribosomal subunit; part of the 5S rRNA/L5/L18/L25 subcomplex. Contacts the 5S and 23S rRNAs.

Its function is as follows. This is one of the proteins that bind and probably mediate the attachment of the 5S RNA into the large ribosomal subunit, where it forms part of the central protuberance. The chain is Large ribosomal subunit protein uL18 from Chlorobium luteolum (strain DSM 273 / BCRC 81028 / 2530) (Pelodictyon luteolum).